Here is a 239-residue protein sequence, read N- to C-terminus: Fatty acid metabolism regulator protein (239 aa).

The HTH gntR-type domain occupies 6–74; sequence QSPAGFAEEY…HGKPTKVNNF (69 aa). Residues 34–53 constitute a DNA-binding region (H-T-H motif); it reads ERELSELIGVTRTTLREVLQ.

In terms of assembly, homodimer.

It is found in the cytoplasm. Functionally, multifunctional regulator of fatty acid metabolism. The sequence is that of Fatty acid metabolism regulator protein from Yersinia pseudotuberculosis serotype O:1b (strain IP 31758).